Reading from the N-terminus, the 648-residue chain is Exoribonuclease 2 (648 aa).

Residues 191-518 (RIDLTYLDFI…INHRLIKSII (328 aa)) enclose the RNB domain. The S1 motif domain maps to 565–647 (KKKYQANIID…GNKKIIATMI (83 aa)).

This sequence belongs to the RNR ribonuclease family. RNase II subfamily.

It localises to the cytoplasm. The enzyme catalyses Exonucleolytic cleavage in the 3'- to 5'-direction to yield nucleoside 5'-phosphates.. Its function is as follows. Involved in mRNA degradation. Hydrolyzes single-stranded polyribonucleotides processively in the 3' to 5' direction. The protein is Exoribonuclease 2 of Buchnera aphidicola subsp. Cinara cedri (strain Cc).